The following is a 112-amino-acid chain: ATP synthase subunit c (112 aa).

The next 2 helical transmembrane spans lie at F36–M56 and M81–I101.

Belongs to the ATPase C chain family. F-type ATPases have 2 components, F(1) - the catalytic core - and F(0) - the membrane proton channel. F(1) has five subunits: alpha(3), beta(3), gamma(1), delta(1), epsilon(1). F(0) has three main subunits: a(1), b(2) and c(10-14). The alpha and beta chains form an alternating ring which encloses part of the gamma chain. F(1) is attached to F(0) by a central stalk formed by the gamma and epsilon chains, while a peripheral stalk is formed by the delta and b chains.

Its subcellular location is the cell inner membrane. F(1)F(0) ATP synthase produces ATP from ADP in the presence of a proton or sodium gradient. F-type ATPases consist of two structural domains, F(1) containing the extramembraneous catalytic core and F(0) containing the membrane proton channel, linked together by a central stalk and a peripheral stalk. During catalysis, ATP synthesis in the catalytic domain of F(1) is coupled via a rotary mechanism of the central stalk subunits to proton translocation. In terms of biological role, key component of the F(0) channel; it plays a direct role in translocation across the membrane. A homomeric c-ring of between 10-14 subunits forms the central stalk rotor element with the F(1) delta and epsilon subunits. This is ATP synthase subunit c from Campylobacter jejuni subsp. doylei (strain ATCC BAA-1458 / RM4099 / 269.97).